A 216-amino-acid polypeptide reads, in one-letter code: Probable transaldolase (216 aa).

Catalysis depends on lysine 83, which acts as the Schiff-base intermediate with substrate.

Belongs to the transaldolase family. Type 3B subfamily.

It is found in the cytoplasm. The catalysed reaction is D-sedoheptulose 7-phosphate + D-glyceraldehyde 3-phosphate = D-erythrose 4-phosphate + beta-D-fructose 6-phosphate. It participates in carbohydrate degradation; pentose phosphate pathway; D-glyceraldehyde 3-phosphate and beta-D-fructose 6-phosphate from D-ribose 5-phosphate and D-xylulose 5-phosphate (non-oxidative stage): step 2/3. Transaldolase is important for the balance of metabolites in the pentose-phosphate pathway. The protein is Probable transaldolase of Sorangium cellulosum (strain So ce56) (Polyangium cellulosum (strain So ce56)).